The following is a 1137-amino-acid chain: Eukaryotic translation initiation factor 3 subunit A (1137 aa).

A PCI domain is found at L319 to T501. Basic and acidic residues-rich tracts occupy residues Q588–E623 and A829–D899. Disordered regions lie at residues Q588–I631 and A829–R1137. A Phosphoserine modification is found at S908. Composition is skewed to basic and acidic residues over residues R922–S971, S985–R1046, D1054–Q1083, and A1106–D1127.

Belongs to the eIF-3 subunit A family. Component of the eukaryotic translation initiation factor 3 (eIF-3) complex. The eIF-3 complex interacts with pix.

The protein localises to the cytoplasm. RNA-binding component of the eukaryotic translation initiation factor 3 (eIF-3) complex, which is involved in protein synthesis of a specialized repertoire of mRNAs and, together with other initiation factors, stimulates binding of mRNA and methionyl-tRNAi to the 40S ribosome. The eIF-3 complex specifically targets and initiates translation of a subset of mRNAs involved in cell proliferation. The protein is Eukaryotic translation initiation factor 3 subunit A of Drosophila yakuba (Fruit fly).